We begin with the raw amino-acid sequence, 832 residues long: Adhesin AWP2 (832 aa).

Residues 1–25 (MRKLPLFMAWKFWLICLYIIKVAST) form the signal peptide. N-linked (GlcNAc...) asparagine glycans are attached at residues asparagine 187, asparagine 290, asparagine 372, asparagine 390, asparagine 435, asparagine 448, asparagine 472, asparagine 482, asparagine 507, asparagine 512, asparagine 515, asparagine 534, asparagine 562, asparagine 579, asparagine 695, and asparagine 721. Residues 722-747 (QTTSPSMHTTSLVGSENGVSAKTVND) are disordered.

It localises to the secreted. Its subcellular location is the cell wall. Functionally, mediates cell-substrate adhesion and promotes biofilm formation. This chain is Adhesin AWP2, found in Candida glabrata (strain ATCC 2001 / BCRC 20586 / JCM 3761 / NBRC 0622 / NRRL Y-65 / CBS 138) (Yeast).